The following is a 340-amino-acid chain: Phosphoribosylformylglycinamidine cyclo-ligase (340 aa).

This sequence belongs to the AIR synthase family.

It is found in the cytoplasm. It catalyses the reaction 2-formamido-N(1)-(5-O-phospho-beta-D-ribosyl)acetamidine + ATP = 5-amino-1-(5-phospho-beta-D-ribosyl)imidazole + ADP + phosphate + H(+). It participates in purine metabolism; IMP biosynthesis via de novo pathway; 5-amino-1-(5-phospho-D-ribosyl)imidazole from N(2)-formyl-N(1)-(5-phospho-D-ribosyl)glycinamide: step 2/2. The chain is Phosphoribosylformylglycinamidine cyclo-ligase from Streptococcus gordonii (strain Challis / ATCC 35105 / BCRC 15272 / CH1 / DL1 / V288).